A 383-amino-acid chain; its full sequence is Succinyl-diaminopimelate desuccinylase (383 aa).

Position 74 (His74) interacts with Zn(2+). The active site involves Asp76. Asp107 serves as a coordination point for Zn(2+). The active-site Proton acceptor is the Glu141. The Zn(2+) site is built by Glu142, Glu170, and His356.

This sequence belongs to the peptidase M20A family. DapE subfamily. Homodimer. Zn(2+) serves as cofactor. It depends on Co(2+) as a cofactor.

The enzyme catalyses N-succinyl-(2S,6S)-2,6-diaminopimelate + H2O = (2S,6S)-2,6-diaminopimelate + succinate. It participates in amino-acid biosynthesis; L-lysine biosynthesis via DAP pathway; LL-2,6-diaminopimelate from (S)-tetrahydrodipicolinate (succinylase route): step 3/3. Functionally, catalyzes the hydrolysis of N-succinyl-L,L-diaminopimelic acid (SDAP), forming succinate and LL-2,6-diaminopimelate (DAP), an intermediate involved in the bacterial biosynthesis of lysine and meso-diaminopimelic acid, an essential component of bacterial cell walls. This Cupriavidus necator (strain ATCC 17699 / DSM 428 / KCTC 22496 / NCIMB 10442 / H16 / Stanier 337) (Ralstonia eutropha) protein is Succinyl-diaminopimelate desuccinylase.